The following is a 157-amino-acid chain: Large ribosomal subunit protein eL24 (157 aa).

A disordered region spans residues 94 to 157 (RNQKPEVRKA…ISAPRVGGKR (64 aa)). Basic and acidic residues predominate over residues 96–117 (QKPEVRKAQREQAIRAAKESKK). A compositionally biased stretch (low complexity) spans 123–140 (KKPAAASAKTSAKTAQKP).

Belongs to the eukaryotic ribosomal protein eL24 family. Component of the large ribosomal subunit.

Its subcellular location is the cytoplasm. Component of the large ribosomal subunit. The ribosome is a large ribonucleoprotein complex responsible for the synthesis of proteins in the cell. The sequence is that of Large ribosomal subunit protein eL24 (rpl24) from Gillichthys mirabilis (Long-jawed mudsucker).